A 143-amino-acid chain; its full sequence is Small ribosomal subunit protein uS9 (143 aa).

Positions 118–143 (DSRRTEPHKPNRSTKGPRAKRQKSYR) are disordered. A compositionally biased stretch (basic residues) spans 127-143 (PNRSTKGPRAKRQKSYR).

It belongs to the universal ribosomal protein uS9 family.

This Thermococcus sibiricus (strain DSM 12597 / MM 739) protein is Small ribosomal subunit protein uS9.